The sequence spans 488 residues: Ribulose bisphosphate carboxylase large chain (488 aa).

2 residues coordinate substrate: N127 and T177. The active-site Proton acceptor is the K179. K181 lines the substrate pocket. The Mg(2+) site is built by K205, D207, and E208. At K205 the chain carries N6-carboxylysine. H297 functions as the Proton acceptor in the catalytic mechanism. R298, H330, and S382 together coordinate substrate.

It belongs to the RuBisCO large chain family. Type I subfamily. In terms of assembly, heterohexadecamer of 8 large chains and 8 small chains. The cofactor is Mg(2+).

It is found in the plastid. Its subcellular location is the chloroplast. The catalysed reaction is 2 (2R)-3-phosphoglycerate + 2 H(+) = D-ribulose 1,5-bisphosphate + CO2 + H2O. It carries out the reaction D-ribulose 1,5-bisphosphate + O2 = 2-phosphoglycolate + (2R)-3-phosphoglycerate + 2 H(+). Its function is as follows. RuBisCO catalyzes two reactions: the carboxylation of D-ribulose 1,5-bisphosphate, the primary event in carbon dioxide fixation, as well as the oxidative fragmentation of the pentose substrate in the photorespiration process. Both reactions occur simultaneously and in competition at the same active site. In Ectocarpus siliculosus (Brown alga), this protein is Ribulose bisphosphate carboxylase large chain.